The primary structure comprises 475 residues: Tubulin epsilon chain (475 aa).

148–154 lines the GTP pocket; that stretch reads GGGTGSG.

It belongs to the tubulin family. As to quaternary structure, found in a complex with TEDC1, TEDC2, TUBE1 and TUBD1.

The protein resides in the cytoplasm. It localises to the cytoskeleton. It is found in the microtubule organizing center. Its subcellular location is the centrosome. The polypeptide is Tubulin epsilon chain (Tube1) (Mus musculus (Mouse)).